The chain runs to 345 residues: Cytoskeleton protein RodZ (345 aa).

The Cytoplasmic portion of the chain corresponds to 1–111 (MNTEASQDQT…LGKKHKKRDG (111 aa)). In terms of domain architecture, HTH cro/C1-type spans 19-79 (LRQARESLGL…KLVHLPEDEL (61 aa)). The segment at residues 30-49 (QQTVAERLCLKVSTIRDIEE) is a DNA-binding region (H-T-H motif). Residues 112-132 (WLMSFTWLIVLVVLGLTGAWW) form a helical; Signal-anchor for type II membrane protein membrane-spanning segment. Residues 133 to 345 (WQNHQAQQAE…RVARLTVCVE (213 aa)) are Periplasmic-facing. A disordered region spans residues 151–259 (SAQLSQNGGQ…PLPTADAGVS (109 aa)). The span at 188–225 (PLTNHSGSAITNSATTSSVPKTTSTEPVDTANTNTTMH) shows a compositional bias: polar residues. The segment covering 229-241 (AASAAVSPSQVPQ) has biased composition (low complexity).

This sequence belongs to the RodZ family.

It localises to the cell inner membrane. In terms of biological role, cytoskeletal protein that is involved in cell-shape control through regulation of the length of the long axis. The protein is Cytoskeleton protein RodZ of Yersinia pestis bv. Antiqua (strain Antiqua).